The primary structure comprises 1009 residues: Type VII secretion system accessory factor EsaA (1009 aa).

The next 6 helical transmembrane spans lie at 7 to 27, 822 to 842, 869 to 889, 903 to 923, 928 to 948, and 979 to 999; these read IYAL…IFFV, ISPT…AYIF, VITS…VGLI, KFIL…TYLL, SIGM…MNNL, and IGLA…LNMF.

It belongs to the EsaA family. Homodimer. Interacts with EssB.

Its subcellular location is the cell membrane. In terms of biological role, component of the type VII secretion system (Ess). Provides together with EssB and other components such as EssC and EssE a secretion platform across the cytoplasmic membrane in the host. The polypeptide is Type VII secretion system accessory factor EsaA (Staphylococcus aureus (strain Mu50 / ATCC 700699)).